The primary structure comprises 38 residues: Photosystem II reaction center protein L (38 aa).

A helical membrane pass occupies residues 17-37 (SLFWGLLLIFVLAVLFSSYFF).

This sequence belongs to the PsbL family. PSII is composed of 1 copy each of membrane proteins PsbA, PsbB, PsbC, PsbD, PsbE, PsbF, PsbH, PsbI, PsbJ, PsbK, PsbL, PsbM, PsbT, PsbX, PsbY, PsbZ, Psb30/Ycf12, at least 3 peripheral proteins of the oxygen-evolving complex and a large number of cofactors. It forms dimeric complexes.

It localises to the plastid. Its subcellular location is the chloroplast thylakoid membrane. Functionally, one of the components of the core complex of photosystem II (PSII). PSII is a light-driven water:plastoquinone oxidoreductase that uses light energy to abstract electrons from H(2)O, generating O(2) and a proton gradient subsequently used for ATP formation. It consists of a core antenna complex that captures photons, and an electron transfer chain that converts photonic excitation into a charge separation. This subunit is found at the monomer-monomer interface and is required for correct PSII assembly and/or dimerization. The sequence is that of Photosystem II reaction center protein L from Gracilaria tenuistipitata var. liui (Red alga).